The primary structure comprises 120 residues: Ribonuclease P protein component (120 aa).

The protein belongs to the RnpA family. Consists of a catalytic RNA component (M1 or rnpB) and a protein subunit.

It catalyses the reaction Endonucleolytic cleavage of RNA, removing 5'-extranucleotides from tRNA precursor.. RNaseP catalyzes the removal of the 5'-leader sequence from pre-tRNA to produce the mature 5'-terminus. It can also cleave other RNA substrates such as 4.5S RNA. The protein component plays an auxiliary but essential role in vivo by binding to the 5'-leader sequence and broadening the substrate specificity of the ribozyme. This chain is Ribonuclease P protein component, found in Dehalococcoides mccartyi (strain CBDB1).